Reading from the N-terminus, the 402-residue chain is Phosphoglycerate kinase (402 aa).

Substrate is bound by residues 24–26 (DFN), Arg40, 63–66 (HFGR), Arg122, and Arg155. Residues Lys206, Gly297, Glu328, and 357-360 (GGDS) each bind ATP.

Belongs to the phosphoglycerate kinase family. Monomer.

It is found in the cytoplasm. It catalyses the reaction (2R)-3-phosphoglycerate + ATP = (2R)-3-phospho-glyceroyl phosphate + ADP. It participates in carbohydrate degradation; glycolysis; pyruvate from D-glyceraldehyde 3-phosphate: step 2/5. This Synechococcus elongatus (strain ATCC 33912 / PCC 7942 / FACHB-805) (Anacystis nidulans R2) protein is Phosphoglycerate kinase.